The chain runs to 270 residues: Urease accessory protein UreD (270 aa).

It belongs to the UreD family. UreD, UreF and UreG form a complex that acts as a GTP-hydrolysis-dependent molecular chaperone, activating the urease apoprotein by helping to assemble the nickel containing metallocenter of UreC. The complex may form in the order UreABCD, UreABCDF, UreABCDFG. The UreE protein probably delivers the nickel in a GTPase-dependent fashion.

It localises to the cytoplasm. In terms of biological role, necessary for the functional incorporation of the urease nickel metallocenter. The sequence is that of Urease accessory protein UreD from Klebsiella aerogenes (Enterobacter aerogenes).